The chain runs to 332 residues: ATPase GET3 (332 aa).

Residue 32–39 coordinates ATP; it reads KGGVGKTT. Residue Asp61 is part of the active site. Positions 235 and 262 each coordinate ATP. Residues Cys273 and Cys276 each coordinate Zn(2+).

This sequence belongs to the arsA ATPase family. As to quaternary structure, homodimer.

Its subcellular location is the cytoplasm. It is found in the endoplasmic reticulum. Functionally, ATPase required for the post-translational delivery of tail-anchored (TA) proteins to the endoplasmic reticulum. Recognizes and selectively binds the transmembrane domain of TA proteins in the cytosol. This complex then targets to the endoplasmic reticulum by membrane-bound receptors, where the tail-anchored protein is released for insertion. This process is regulated by ATP binding and hydrolysis. ATP binding drives the homodimer towards the closed dimer state, facilitating recognition of newly synthesized TA membrane proteins. ATP hydrolysis is required for insertion. Subsequently, the homodimer reverts towards the open dimer state, lowering its affinity for the membrane-bound receptor, and returning it to the cytosol to initiate a new round of targeting. This chain is ATPase GET3, found in Mycosarcoma maydis (Corn smut fungus).